Reading from the N-terminus, the 477-residue chain is Glycogen synthase (477 aa).

Lys15 lines the ADP-alpha-D-glucose pocket.

The protein belongs to the glycosyltransferase 1 family. Bacterial/plant glycogen synthase subfamily.

It catalyses the reaction [(1-&gt;4)-alpha-D-glucosyl](n) + ADP-alpha-D-glucose = [(1-&gt;4)-alpha-D-glucosyl](n+1) + ADP + H(+). It participates in glycan biosynthesis; glycogen biosynthesis. Synthesizes alpha-1,4-glucan chains using ADP-glucose. The sequence is that of Glycogen synthase from Salmonella arizonae (strain ATCC BAA-731 / CDC346-86 / RSK2980).